Consider the following 97-residue polypeptide: Cobalt transport protein CbiN (97 aa).

Helical transmembrane passes span 6–26 (VLMI…YSGL) and 68–88 (SLLF…FFGY).

It belongs to the CbiN family. Forms an energy-coupling factor (ECF) transporter complex composed of an ATP-binding protein (A component, CbiO), a transmembrane protein (T component, CbiQ) and 2 possible substrate-capture proteins (S components, CbiM and CbiN) of unknown stoichimetry.

It localises to the cell membrane. Its pathway is cofactor biosynthesis; adenosylcobalamin biosynthesis. Part of the energy-coupling factor (ECF) transporter complex CbiMNOQ involved in cobalt import. The chain is Cobalt transport protein CbiN from Methanococcus maripaludis (strain C6 / ATCC BAA-1332).